The following is a 78-amino-acid chain: Acyl carrier protein (78 aa).

The Carrier domain occupies 2–77 (SSIEERVKKI…QATSYVEANL (76 aa)). Ser-37 carries the O-(pantetheine 4'-phosphoryl)serine modification.

This sequence belongs to the acyl carrier protein (ACP) family. 4'-phosphopantetheine is transferred from CoA to a specific serine of apo-ACP by AcpS. This modification is essential for activity because fatty acids are bound in thioester linkage to the sulfhydryl of the prosthetic group.

It localises to the cytoplasm. It functions in the pathway lipid metabolism; fatty acid biosynthesis. Its function is as follows. Carrier of the growing fatty acid chain in fatty acid biosynthesis. This is Acyl carrier protein from Hydrogenovibrio crunogenus (strain DSM 25203 / XCL-2) (Thiomicrospira crunogena).